A 90-amino-acid polypeptide reads, in one-letter code: Albumin-1 (90 aa).

A signal peptide is located at residue A1. 3 disulfides stabilise this stretch: C4–C21, C8–C23, and C16–C34. A propeptide spanning residues 40 to 47 is cleaved from the precursor; it reads LSSVAKMI.

Post-translationally, the C-terminal glycine may be removed from A1b.

In terms of biological role, A1b binds to basic 7S globulin (BG) and stimulates its phosphorylation activity. This Phaseolus angularis (Azuki bean) protein is Albumin-1 (LEG).